The primary structure comprises 620 residues: MDSHTLLQALIYLGSAALIVPIAVRLGLGSVLGYLIAGCIIGPWGLRLVTDAESILHFAEIGVVLMLFVIGLELDPQRLWKLRASVFGGGALQMGVCGGLIGLFCMFLGLRWQVAELIGMTLALSSTAIAMQAMNERNLTVSQVGRSAFAVLLFQDIAAIPLVAMIPLLAASGASTTLGAFALSALKVAGALALVVLLGRYVTRPALRFVARSGLREVFSAVALFLVFGFGLLLEEVGLSMAMGAFLAGVLLASSEYRHALESDIEPFKGLLLGLFFIGVGMSIDFGTLVENPLRILLLLAGFLAIKIVMLWLVARPLGVPAKQRRWFAVLLGQGSEFAFVVFGAAQMADVLEPEWAKALTLAVALSMAATPIFLVLLTRMEKTATGEAREADEIDEEQPRVIVAGFGRFGQIAGRLLLSSGVKMVVLDHDPDHIETLRKFGMKVFYGDATRMDLLESAGAAKAEVLINAIDDPQTNLQLSELVKSHFPHLQIIARARDVDHYIRLRQAGVAMPERETFEGALKSGRQALEALGLGRYEARERADLFRHFNTRMVEEMAKGENDPLSRAAAYKRTSAMLSEIITEDREHLSLIQRHGWQGTAEGKHSGEVADEPEVKPSI.

At 1-3 (MDS) the chain is on the periplasmic side. Residues 4-24 (HTLLQALIYLGSAALIVPIAV) form a helical membrane-spanning segment. A topological domain (cytoplasmic) is located at residue R25. The helical transmembrane segment at 26–46 (LGLGSVLGYLIAGCIIGPWGL) threads the bilayer. Residues 47 to 53 (RLVTDAE) lie on the Periplasmic side of the membrane. A helical membrane pass occupies residues 54–74 (SILHFAEIGVVLMLFVIGLEL). Over 75–89 (DPQRLWKLRASVFGG) the chain is Cytoplasmic. Residues 90 to 110 (GALQMGVCGGLIGLFCMFLGL) form a helical membrane-spanning segment. At 111-113 (RWQ) the chain is on the periplasmic side. A helical membrane pass occupies residues 114-134 (VAELIGMTLALSSTAIAMQAM). Over 135-148 (NERNLTVSQVGRSA) the chain is Cytoplasmic. A helical membrane pass occupies residues 149–169 (FAVLLFQDIAAIPLVAMIPLL). At 170-177 (AASGASTT) the chain is on the periplasmic side. A helical transmembrane segment spans residues 178-198 (LGAFALSALKVAGALALVVLL). The Cytoplasmic portion of the chain corresponds to 199–213 (GRYVTRPALRFVARS). Residues 214–233 (GLREVFSAVALFLVFGFGLL) form a helical membrane-spanning segment. The Periplasmic portion of the chain corresponds to 234–236 (LEE). The helical transmembrane segment at 237–254 (VGLSMAMGAFLAGVLLAS) threads the bilayer. Residues 255–269 (SEYRHALESDIEPFK) are Cytoplasmic-facing. Residues 270–290 (GLLLGLFFIGVGMSIDFGTLV) traverse the membrane as a helical segment. At 291 to 293 (ENP) the chain is on the periplasmic side. The helical transmembrane segment at 294-314 (LRILLLLAGFLAIKIVMLWLV) threads the bilayer. Residues 315 to 326 (ARPLGVPAKQRR) are Cytoplasmic-facing. A helical membrane pass occupies residues 327-347 (WFAVLLGQGSEFAFVVFGAAQ). Over 348 to 358 (MADVLEPEWAK) the chain is Periplasmic. A helical transmembrane segment spans residues 359-379 (ALTLAVALSMAATPIFLVLLT). Residues 380–620 (RMEKTATGEA…ADEPEVKPSI (241 aa)) lie on the Cytoplasmic side of the membrane. One can recognise an RCK N-terminal domain in the interval 399–518 (QPRVIVAGFG…AGVAMPERET (120 aa)). Residues 599-620 (QGTAEGKHSGEVADEPEVKPSI) are disordered.

The protein belongs to the monovalent cation:proton antiporter 2 (CPA2) transporter (TC 2.A.37) family. KefC subfamily. Homodimer. Interacts with the regulatory subunit KefF.

It is found in the cell inner membrane. Its function is as follows. Pore-forming subunit of a potassium efflux system that confers protection against electrophiles. Catalyzes K(+)/H(+) antiport. In Salmonella typhimurium (strain LT2 / SGSC1412 / ATCC 700720), this protein is Glutathione-regulated potassium-efflux system protein KefC.